A 294-amino-acid polypeptide reads, in one-letter code: tRNA dimethylallyltransferase (294 aa).

10-17 (GPTAVGKT) contacts ATP. 12 to 17 (TAVGKT) serves as a coordination point for substrate. The interaction with substrate tRNA stretch occupies residues 35-38 (DSQQ).

The protein belongs to the IPP transferase family. In terms of assembly, monomer. Requires Mg(2+) as cofactor.

The enzyme catalyses adenosine(37) in tRNA + dimethylallyl diphosphate = N(6)-dimethylallyladenosine(37) in tRNA + diphosphate. Functionally, catalyzes the transfer of a dimethylallyl group onto the adenine at position 37 in tRNAs that read codons beginning with uridine, leading to the formation of N6-(dimethylallyl)adenosine (i(6)A). This Streptococcus pneumoniae serotype 19F (strain G54) protein is tRNA dimethylallyltransferase.